The sequence spans 510 residues: Internal alternative NAD(P)H-ubiquinone oxidoreductase A1, mitochondrial (510 aa).

Residues 1–48 (MLWIKNLARISQTTSSSVGNVFRNPESYTLSSRFCTALQKQQVTDTVQ) constitute a mitochondrion transit peptide. Residue 75–105 (RVLVLGSGWAGCRVLKGIDTSIYDVVCVSPR) participates in FAD binding. Position 242 to 278 (242 to 278 (LHCVVVGGGPTGVEFSGELSDFIMKDVRQRYSHVKDD)) interacts with NAD(+). A Microbody targeting signal motif is present at residues 501–510 (FVFGRDISRI).

It belongs to the NADH dehydrogenase family. FAD is required as a cofactor. As to expression, expressed in seedlings, cotyledons, young leaves, stems and flowers and, to a lower extent, in roots and buds.

It is found in the mitochondrion inner membrane. The protein localises to the peroxisome. The enzyme catalyses a quinone + NADH + H(+) = a quinol + NAD(+). It catalyses the reaction a ubiquinone + NADH + H(+) = a ubiquinol + NAD(+). In terms of biological role, alternative NADH-ubiquinone oxidoreductase which catalyzes the oxidation of mitochondrial NADH does not translocate protons across the inner mitochondrial membrane. This is Internal alternative NAD(P)H-ubiquinone oxidoreductase A1, mitochondrial (NDA1) from Arabidopsis thaliana (Mouse-ear cress).